The sequence spans 201 residues: Small ribosomal subunit protein uS4c (201 aa).

Residues Gly20 to Gly39 are disordered. Residues Met89–Asn150 enclose the S4 RNA-binding domain.

It belongs to the universal ribosomal protein uS4 family. In terms of assembly, part of the 30S ribosomal subunit. Contacts protein S5. The interaction surface between S4 and S5 is involved in control of translational fidelity.

Its subcellular location is the plastid. The protein resides in the chloroplast. In terms of biological role, one of the primary rRNA binding proteins, it binds directly to 16S rRNA where it nucleates assembly of the body of the 30S subunit. With S5 and S12 plays an important role in translational accuracy. The protein is Small ribosomal subunit protein uS4c (rps4) of Oryza nivara (Indian wild rice).